Here is a 338-residue protein sequence, read N- to C-terminus: Ketol-acid reductoisomerase (NADP(+)) (338 aa).

The KARI N-terminal Rossmann domain occupies Met1–Thr181. NADP(+) contacts are provided by residues Tyr24–Gln27, Arg47, Ser50, Ser52, and Asp82–Gln85. Residue His107 is part of the active site. Residue Gly133 participates in NADP(+) binding. The region spanning Ser182–Ile327 is the KARI C-terminal knotted domain. The Mg(2+) site is built by Asp190, Glu194, Glu226, and Glu230. Ser251 contacts substrate.

It belongs to the ketol-acid reductoisomerase family. The cofactor is Mg(2+).

It carries out the reaction (2R)-2,3-dihydroxy-3-methylbutanoate + NADP(+) = (2S)-2-acetolactate + NADPH + H(+). It catalyses the reaction (2R,3R)-2,3-dihydroxy-3-methylpentanoate + NADP(+) = (S)-2-ethyl-2-hydroxy-3-oxobutanoate + NADPH + H(+). Its pathway is amino-acid biosynthesis; L-isoleucine biosynthesis; L-isoleucine from 2-oxobutanoate: step 2/4. It participates in amino-acid biosynthesis; L-valine biosynthesis; L-valine from pyruvate: step 2/4. Its function is as follows. Involved in the biosynthesis of branched-chain amino acids (BCAA). Catalyzes an alkyl-migration followed by a ketol-acid reduction of (S)-2-acetolactate (S2AL) to yield (R)-2,3-dihydroxy-isovalerate. In the isomerase reaction, S2AL is rearranged via a Mg-dependent methyl migration to produce 3-hydroxy-3-methyl-2-ketobutyrate (HMKB). In the reductase reaction, this 2-ketoacid undergoes a metal-dependent reduction by NADPH to yield (R)-2,3-dihydroxy-isovalerate. The protein is Ketol-acid reductoisomerase (NADP(+)) of Magnetococcus marinus (strain ATCC BAA-1437 / JCM 17883 / MC-1).